The primary structure comprises 517 residues: MVTRDAGMADDAATGSTRTYQVRTYGCQMNVHDSERLAGLLEAAGYQRAADEADVGDADVVVFNTCAVRENADNRLYGNLSHLAPRKRNNPDMQIAVGGCLAQKDKHTVLSKAPWVDIVFGTHNLGSLPTLLDRARHNKVAQVEIVEALQHFPSSLPSARESDYAAWVSISVGCNNSCTFCIVPSLRGKEVDRSPADILAEVEALVADGVLEVTLLGQNVNAYGVSFADPALARNRGSFAELLRSCGSIDGLERVRFTSPHPAEFTYDVIEAMAQTPNVCPSLHMPLQSGSDRVLRAMRRSYRVERYLGIIGQVRAAMPHAAITTDLIVGFPGETEEDFAATLDVVRQVRFTAAFTFQYSKRPGTPAAELGGQLPKAVVQERYERLVELQEQICMEENRVLIGRIVELLVTTGEGRKDARTARRTGRARDGRLVHFALDTPWEAQVRPGDIITVMVTEAAPHHLIADAGILTHRRTRAGDAHAARQCPRSIGLGQIPLGMPSVGQHSASIGSAGCAR.

One can recognise an MTTase N-terminal domain in the interval 18–137; it reads RTYQVRTYGC…LPTLLDRARH (120 aa). Cysteine 27, cysteine 66, cysteine 100, cysteine 174, cysteine 178, and cysteine 181 together coordinate [4Fe-4S] cluster. The region spanning 160 to 397 is the Radical SAM core domain; that stretch reads RESDYAAWVS…ELQEQICMEE (238 aa). A TRAM domain is found at 399-470; sequence RVLIGRIVEL…PHHLIADAGI (72 aa).

Belongs to the methylthiotransferase family. MiaB subfamily. As to quaternary structure, monomer. It depends on [4Fe-4S] cluster as a cofactor.

The protein localises to the cytoplasm. The catalysed reaction is N(6)-dimethylallyladenosine(37) in tRNA + (sulfur carrier)-SH + AH2 + 2 S-adenosyl-L-methionine = 2-methylsulfanyl-N(6)-dimethylallyladenosine(37) in tRNA + (sulfur carrier)-H + 5'-deoxyadenosine + L-methionine + A + S-adenosyl-L-homocysteine + 2 H(+). Catalyzes the methylthiolation of N6-(dimethylallyl)adenosine (i(6)A), leading to the formation of 2-methylthio-N6-(dimethylallyl)adenosine (ms(2)i(6)A) at position 37 in tRNAs that read codons beginning with uridine. This chain is tRNA-2-methylthio-N(6)-dimethylallyladenosine synthase, found in Mycobacterium leprae (strain TN).